Reading from the N-terminus, the 94-residue chain is uncharacterized protein (94 aa).

One can recognise an HTH cro/C1-type domain in the interval isoleucine 13–tryptophan 67. The segment at residues leucine 24–threonine 43 is a DNA-binding region (H-T-H motif).

This sequence belongs to the VapA/VapI family.

This is an uncharacterized protein from Escherichia coli (strain K12).